A 277-amino-acid polypeptide reads, in one-letter code: MDAETLSLSLELVSGSGPGLSAEQCAALRASLPLLHRDLRLRRLRLWGVVLGLRGDYVIARGWGGPDLLRGQLSFYSLNCVDWCLLPPATDAHIAQTQGIKGRFVGDPAHEYEYIVRNTAGGGDSALEEELTTHIKEEVRLTGTIAMIDREAAVAPRGAYIRNPLGQVIVNHSFRGLEVSEGKKLSSYFHFTPSLNPKKKSLLEKAALDPSIDFLDSLEHDIPRGSWSLQLEQGDSVLILRSLLWLGMTFYHVPLTPLHGHLYIGTGERNLDLPFMI.

Belongs to the flagellar radial spoke RSP9 family. Component of axonemal radial spoke complexes.

It localises to the cytoplasm. The protein localises to the cytoskeleton. It is found in the cilium axoneme. The protein resides in the flagellum axoneme. Its subcellular location is the cell projection. It localises to the kinocilium. Its function is as follows. Functions as part of axonemal radial spoke complexes that play an important part in the motility of sperm and cilia. Essential for both the radial spoke head assembly and the central pair microtubule stability in ependymal motile cilia. Required for motility of olfactory and neural cilia and for the structural integrity of ciliary axonemes in both 9+0 and 9+2 motile cilia. This Xenopus tropicalis (Western clawed frog) protein is Radial spoke head protein 9 homolog (rsph9).